A 93-amino-acid chain; its full sequence is uncharacterized protein (93 aa).

This is an uncharacterized protein from Rickettsia conorii (strain ATCC VR-613 / Malish 7).